The chain runs to 376 residues: tRNA-specific 2-thiouridylase MnmA (376 aa).

ATP contacts are provided by residues 9–16 and methionine 35; that span reads AMSGGIDS. Cysteine 105 acts as the Nucleophile in catalysis. A disulfide bridge links cysteine 105 with cysteine 202. An ATP-binding site is contributed by glycine 129. The interval 151–153 is interaction with tRNA; it reads KDQ. Cysteine 202 acts as the Cysteine persulfide intermediate in catalysis. The interaction with tRNA stretch occupies residues 312 to 313; the sequence is RY.

It belongs to the MnmA/TRMU family.

Its subcellular location is the cytoplasm. The enzyme catalyses S-sulfanyl-L-cysteinyl-[protein] + uridine(34) in tRNA + AH2 + ATP = 2-thiouridine(34) in tRNA + L-cysteinyl-[protein] + A + AMP + diphosphate + H(+). Functionally, catalyzes the 2-thiolation of uridine at the wobble position (U34) of tRNA, leading to the formation of s(2)U34. The polypeptide is tRNA-specific 2-thiouridylase MnmA (Amoebophilus asiaticus (strain 5a2)).